We begin with the raw amino-acid sequence, 514 residues long: Probable cytosol aminopeptidase (514 aa).

2 residues coordinate Mn(2+): Lys-266 and Asp-271. The active site involves Lys-278. Mn(2+)-binding residues include Asp-289, Asp-357, and Glu-359. The active site involves Arg-361.

Belongs to the peptidase M17 family. Requires Mn(2+) as cofactor.

The protein resides in the cytoplasm. The catalysed reaction is Release of an N-terminal amino acid, Xaa-|-Yaa-, in which Xaa is preferably Leu, but may be other amino acids including Pro although not Arg or Lys, and Yaa may be Pro. Amino acid amides and methyl esters are also readily hydrolyzed, but rates on arylamides are exceedingly low.. It catalyses the reaction Release of an N-terminal amino acid, preferentially leucine, but not glutamic or aspartic acids.. Presumably involved in the processing and regular turnover of intracellular proteins. Catalyzes the removal of unsubstituted N-terminal amino acids from various peptides. The sequence is that of Probable cytosol aminopeptidase from Oleidesulfovibrio alaskensis (strain ATCC BAA-1058 / DSM 17464 / G20) (Desulfovibrio alaskensis).